The sequence spans 195 residues: Cysteine/O-acetylserine efflux protein (195 aa).

Topologically, residues 1-9 (MTPILLSAF) are periplasmic. Residues 10-32 (WTYTLITAMTPGPNNILALSSAT) form a helical membrane-spanning segment. Topologically, residues 33 to 46 (SHGFRQSTRVLAGM) are cytoplasmic. The helical transmembrane segment at 47–67 (SLGFLIVMLLCAGISFSLAVI) threads the bilayer. At 68-69 (DP) the chain is on the periplasmic side. A helical membrane pass occupies residues 70-90 (AAVHLLSWAGAAYIVWLAWKI). The Cytoplasmic portion of the chain corresponds to 91–104 (ATSPTKEDGLQAKP). Residues 105 to 125 (ISFWASFALQFVNVKIILYGV) form a helical membrane-spanning segment. The Periplasmic segment spans residues 126–141 (TALSTFVLPQTQALSW). Residues 142 to 162 (VVGVSVLLAMIGTFGNVCWAL) traverse the membrane as a helical segment. Residues 163 to 176 (AGHLFQRLFRQYGR) lie on the Cytoplasmic side of the membrane. The helical transmembrane segment at 177–194 (QLNIVLALLLVYCAVRIF) threads the bilayer. Residue Y195 is a topological domain, periplasmic.

The protein belongs to the Rht family.

It localises to the cell inner membrane. The catalysed reaction is O-acetyl-L-serine(in) = O-acetyl-L-serine(out). It carries out the reaction L-cysteine(in) = L-cysteine(out). Its function is as follows. Exporter of O-acetylserine (OAS) and cysteine. The polypeptide is Cysteine/O-acetylserine efflux protein (eamB) (Shigella flexneri serotype 5b (strain 8401)).